The following is a 179-amino-acid chain: uncharacterized protein (179 aa).

Positions 21–109 (QQDAVILVDV…WKQAGLPTVK (89 aa)) constitute a Rhodanese domain. The next 2 membrane-spanning stretches (helical) occupy residues 115-135 (ISIM…GVLL) and 138-158 (FVAP…LFAG).

The protein localises to the cell membrane. This is an uncharacterized protein from Synechocystis sp. (strain ATCC 27184 / PCC 6803 / Kazusa).